We begin with the raw amino-acid sequence, 414 residues long: 2,3-diketo-5-methylthiopentyl-1-phosphate enolase (414 aa).

Residue lysine 99 is the Proton acceptor of the active site. Residues lysine 148, 174 to 177 (KDDE), histidine 265, glycine 338, and 360 to 361 (GG) contribute to the substrate site. Mg(2+) is bound by residues lysine 174, aspartate 176, and glutamate 177. At lysine 174 the chain carries N6-carboxylysine.

Belongs to the RuBisCO large chain family. Type IV subfamily. In terms of assembly, homodimer. The cofactor is Mg(2+).

It carries out the reaction 5-methylsulfanyl-2,3-dioxopentyl phosphate = 2-hydroxy-5-methylsulfanyl-3-oxopent-1-enyl phosphate. The protein operates within amino-acid biosynthesis; L-methionine biosynthesis via salvage pathway; L-methionine from S-methyl-5-thio-alpha-D-ribose 1-phosphate: step 3/6. In terms of biological role, catalyzes the enolization of 2,3-diketo-5-methylthiopentyl-1-phosphate (DK-MTP-1-P) into 2-hydroxy-3-keto-5-methylthiopentenyl-1-phosphate (HK-MTPenyl-1-P). In Bacillus cereus (strain B4264), this protein is 2,3-diketo-5-methylthiopentyl-1-phosphate enolase.